Consider the following 486-residue polypeptide: O-methyltransferase gedA (486 aa).

S-adenosyl-L-methionine-binding positions include 298–299 (GG), aspartate 321, 353–354 (SF), and arginine 369. Histidine 373 functions as the Proton acceptor in the catalytic mechanism.

Belongs to the class I-like SAM-binding methyltransferase superfamily. Cation-independent O-methyltransferase family.

It catalyses the reaction emodin + S-adenosyl-L-methionine = questin + S-adenosyl-L-homocysteine + H(+). Its pathway is secondary metabolite biosynthesis. Functionally, O-methyltransferase; part of the gene cluster that mediates the biosynthesis of geodin, an intermediate in the biosynthesis of other natural products. The pathway begins with the synthesis of atrochrysone thioester by the polyketide synthase (PKS) gedC. The atrochrysone carboxyl ACP thioesterase gedB then breaks the thioester bond and releases the atrochrysone carboxylic acid from gedC. The atrochrysone carboxylic acid is then converted to atrochrysone which is further transformed into emodinanthrone. The next step is performed by the emodinanthrone oxygenase gedH that catalyzes the oxidation of emodinanthrone to emodin. Emodin O-methyltransferase encoded probably by gedA then catalyzes methylation of the 8-hydroxy group of emodin to form questin. Ring cleavage of questin by questin oxidase gedK leads to desmethylsulochrin via several intermediates including questin epoxide. Another methylation step probably catalyzed by methyltransferase gedG leads to the formation of sulochrin which is further converted to dihydrogeodin by the sulochrin halogenase gedL. Finally, the dihydrogeodin oxidase gedJ catalyzes the stereospecific phenol oxidative coupling reaction converting dihydrogeodin to geodin. The polypeptide is O-methyltransferase gedA (Aspergillus terreus (strain NIH 2624 / FGSC A1156)).